We begin with the raw amino-acid sequence, 360 residues long: Photosystem II protein D1 2 (360 aa).

A run of 3 helical transmembrane segments spans residues 29–46 (YIGW…SATI), 118–133 (HFLI…EWEF), and 142–156 (WICV…AATA). Histidine 118 lines the chlorophyll a pocket. Residue tyrosine 126 coordinates pheophytin a. [CaMn4O5] cluster is bound by residues aspartate 170 and glutamate 189. The helical transmembrane segment at 197–218 (LHMFGVAGVFGGSLFAAMHGSL) threads the bilayer. Histidine 198 is a chlorophyll a binding site. A quinone contacts are provided by residues histidine 215 and 264-265 (SF). Residue histidine 215 participates in Fe cation binding. Histidine 272 contributes to the Fe cation binding site. The chain crosses the membrane as a helical span at residues 274 to 288 (FLAAWPVIGIWLTSL). Residues histidine 332, glutamate 333, aspartate 342, and alanine 344 each coordinate [CaMn4O5] cluster. The propeptide occupies 345–360 (GTESAPVAFAAALGDG).

The protein belongs to the reaction center PufL/M/PsbA/D family. In terms of assembly, PSII is composed of 1 copy each of membrane proteins PsbA, PsbB, PsbC, PsbD, PsbE, PsbF, PsbH, PsbI, PsbJ, PsbK, PsbL, PsbM, PsbT, PsbX, Psb30/Ycf12, peripheral proteins PsbO, CyanoQ (PsbQ), PsbU, PsbV and a large number of cofactors. It forms dimeric complexes. Requires The D1/D2 heterodimer binds P680, chlorophylls that are the primary electron donor of PSII, and subsequent electron acceptors. It shares a non-heme iron and each subunit binds pheophytin, quinone, additional chlorophylls, carotenoids and lipids. D1 provides most of the ligands for the Mn4-Ca-O5 cluster of the oxygen-evolving complex (OEC). There is also a Cl(-1) ion associated with D1 and D2, which is required for oxygen evolution. The PSII complex binds additional chlorophylls, carotenoids and specific lipids. as cofactor. Tyr-161 forms a radical intermediate that is referred to as redox-active TyrZ, YZ or Y-Z. Post-translationally, C-terminally processed by CtpA; processing is essential to allow assembly of the oxygen-evolving complex and thus photosynthetic growth.

It localises to the cell inner membrane. It catalyses the reaction 2 a plastoquinone + 4 hnu + 2 H2O = 2 a plastoquinol + O2. In terms of biological role, photosystem II (PSII) is a light-driven water:plastoquinone oxidoreductase that uses light energy to abstract electrons from H(2)O, generating O(2) and a proton gradient subsequently used for ATP formation. It consists of a core antenna complex that captures photons, and an electron transfer chain that converts photonic excitation into a charge separation. The D1/D2 (PsbA/PsbD) reaction center heterodimer binds P680, the primary electron donor of PSII as well as several subsequent electron acceptors. The polypeptide is Photosystem II protein D1 2 (Gloeobacter violaceus (strain ATCC 29082 / PCC 7421)).